We begin with the raw amino-acid sequence, 361 residues long: Ribosomal RNA large subunit methyltransferase M (361 aa).

S-adenosyl-L-methionine is bound by residues Ser-187, 220–223, Asp-239, Asp-259, and Asp-276; that span reads CPGG. Lys-305 (proton acceptor) is an active-site residue.

It belongs to the class I-like SAM-binding methyltransferase superfamily. RNA methyltransferase RlmE family. RlmM subfamily. Monomer.

It localises to the cytoplasm. The catalysed reaction is cytidine(2498) in 23S rRNA + S-adenosyl-L-methionine = 2'-O-methylcytidine(2498) in 23S rRNA + S-adenosyl-L-homocysteine + H(+). Functionally, catalyzes the 2'-O-methylation at nucleotide C2498 in 23S rRNA. In Shewanella sp. (strain MR-7), this protein is Ribosomal RNA large subunit methyltransferase M.